The primary structure comprises 273 residues: 4-hydroxy-tetrahydrodipicolinate reductase (273 aa).

NAD(+) contacts are provided by residues 12 to 17 (GAGGRM) and Glu38. Arg39 is a binding site for NADP(+). NAD(+) is bound by residues 102–104 (GTT) and 126–129 (AANF). Residue His159 is the Proton donor/acceptor of the active site. His160 lines the (S)-2,3,4,5-tetrahydrodipicolinate pocket. Residue Lys163 is the Proton donor of the active site. Residue 169-170 (GT) coordinates (S)-2,3,4,5-tetrahydrodipicolinate.

The protein belongs to the DapB family. In terms of assembly, homotetramer.

The protein resides in the cytoplasm. It catalyses the reaction (S)-2,3,4,5-tetrahydrodipicolinate + NAD(+) + H2O = (2S,4S)-4-hydroxy-2,3,4,5-tetrahydrodipicolinate + NADH + H(+). The catalysed reaction is (S)-2,3,4,5-tetrahydrodipicolinate + NADP(+) + H2O = (2S,4S)-4-hydroxy-2,3,4,5-tetrahydrodipicolinate + NADPH + H(+). It functions in the pathway amino-acid biosynthesis; L-lysine biosynthesis via DAP pathway; (S)-tetrahydrodipicolinate from L-aspartate: step 4/4. In terms of biological role, catalyzes the conversion of 4-hydroxy-tetrahydrodipicolinate (HTPA) to tetrahydrodipicolinate. The polypeptide is 4-hydroxy-tetrahydrodipicolinate reductase (Salmonella paratyphi A (strain ATCC 9150 / SARB42)).